Reading from the N-terminus, the 123-residue chain is Large ribosomal subunit protein uL14 (123 aa).

Belongs to the universal ribosomal protein uL14 family. Part of the 50S ribosomal subunit. Forms a cluster with proteins L3 and L19. In the 70S ribosome, L14 and L19 interact and together make contacts with the 16S rRNA in bridges B5 and B8.

Binds to 23S rRNA. Forms part of two intersubunit bridges in the 70S ribosome. The protein is Large ribosomal subunit protein uL14 of Enterobacter sp. (strain 638).